A 181-amino-acid chain; its full sequence is MVDVKCLSDCKLQNQLEKLGFSPGPILPSTRKLYEKKLVQLLVSPPCAPPVMNGPRELDGAQDSDDSEELNIILQGNIILSTEKSKKLKKWPEASTTKRKAVDTYCLDYKPSKGRRWAARAPSTRITYGTITKERDYCAEDQTIESWREEGFPVGLKLAVLGIFIIVVFVYLTVENKSLFG.

In terms of domain architecture, LEM spans 1 to 45; that stretch reads MVDVKCLSDCKLQNQLEKLGFSPGPILPSTRKLYEKKLVQLLVSP. Residues 152 to 172 traverse the membrane as a helical; Signal-anchor for type II membrane protein segment; it reads FPVGLKLAVLGIFIIVVFVYL.

As to expression, testis-specific. Isoform 6 is detected in 17 of 18 colon cancer tissues examined.

The protein resides in the membrane. In Homo sapiens (Human), this protein is LEM domain-containing protein 1 (LEMD1).